Consider the following 514-residue polypeptide: tRNA-2-methylthio-N(6)-dimethylallyladenosine synthase (514 aa).

The segment at M1 to A21 is disordered. Residues R68–L186 form the MTTase N-terminal domain. Residues C77, C113, C147, C223, C227, and C230 each coordinate [4Fe-4S] cluster. Residues R209–A440 form the Radical SAM core domain. Positions S442–K505 constitute a TRAM domain.

The protein belongs to the methylthiotransferase family. MiaB subfamily. Monomer. It depends on [4Fe-4S] cluster as a cofactor.

The protein resides in the cytoplasm. The catalysed reaction is N(6)-dimethylallyladenosine(37) in tRNA + (sulfur carrier)-SH + AH2 + 2 S-adenosyl-L-methionine = 2-methylsulfanyl-N(6)-dimethylallyladenosine(37) in tRNA + (sulfur carrier)-H + 5'-deoxyadenosine + L-methionine + A + S-adenosyl-L-homocysteine + 2 H(+). In terms of biological role, catalyzes the methylthiolation of N6-(dimethylallyl)adenosine (i(6)A), leading to the formation of 2-methylthio-N6-(dimethylallyl)adenosine (ms(2)i(6)A) at position 37 in tRNAs that read codons beginning with uridine. This chain is tRNA-2-methylthio-N(6)-dimethylallyladenosine synthase, found in Staphylococcus aureus (strain USA300 / TCH1516).